A 143-amino-acid chain; its full sequence is Transcriptional regulator MraZ (143 aa).

SpoVT-AbrB domains follow at residues 5–47 and 76–119; these read EYKH…SLKE and ACEC…SENN.

It belongs to the MraZ family. In terms of assembly, forms oligomers.

Its subcellular location is the cytoplasm. The protein resides in the nucleoid. The sequence is that of Transcriptional regulator MraZ from Caldicellulosiruptor bescii (strain ATCC BAA-1888 / DSM 6725 / KCTC 15123 / Z-1320) (Anaerocellum thermophilum).